A 337-amino-acid chain; its full sequence is Ferredoxin--NADP reductase (337 aa).

FAD is bound by residues Glu-42, Gln-50, Tyr-55, Val-97, Phe-130, Asp-292, and Thr-333.

Belongs to the ferredoxin--NADP reductase type 2 family. As to quaternary structure, homodimer. The cofactor is FAD.

The catalysed reaction is 2 reduced [2Fe-2S]-[ferredoxin] + NADP(+) + H(+) = 2 oxidized [2Fe-2S]-[ferredoxin] + NADPH. The polypeptide is Ferredoxin--NADP reductase (Streptococcus mutans serotype c (strain ATCC 700610 / UA159)).